We begin with the raw amino-acid sequence, 305 residues long: UDP-N-acetylenolpyruvoylglucosamine reductase (305 aa).

Positions 34–199 (RVGGPAQVLF…TSARFRGEVK (166 aa)) constitute an FAD-binding PCMH-type domain. Arg179 is an active-site residue. Residue Ser228 is the Proton donor of the active site. The active site involves Glu298.

It belongs to the MurB family. It depends on FAD as a cofactor.

Its subcellular location is the cytoplasm. The enzyme catalyses UDP-N-acetyl-alpha-D-muramate + NADP(+) = UDP-N-acetyl-3-O-(1-carboxyvinyl)-alpha-D-glucosamine + NADPH + H(+). It functions in the pathway cell wall biogenesis; peptidoglycan biosynthesis. Functionally, cell wall formation. In Bradyrhizobium diazoefficiens (strain JCM 10833 / BCRC 13528 / IAM 13628 / NBRC 14792 / USDA 110), this protein is UDP-N-acetylenolpyruvoylglucosamine reductase.